The sequence spans 478 residues: Ninja-family protein 8 (478 aa).

Disordered stretches follow at residues 1–247 (MDDD…LTPG), 337–374 (FTAK…EKKA), and 454–478 (DAPA…SAEN). Positions 23–35 (KARDAPLEPKAEP) are enriched in basic and acidic residues. The span at 169 to 179 (ISISTDDGSTG) shows a compositional bias: polar residues. Acidic residues predominate over residues 180-189 (ENEDVAESEA). Over residues 233 to 242 (SFSGSESSSG) the composition is skewed to low complexity. The segment covering 339 to 358 (AKDKADQTGTKQVDDGKKPQ) has biased composition (basic and acidic residues).

The protein belongs to the Ninja family.

The protein localises to the nucleus. The protein is Ninja-family protein 8 of Zea mays (Maize).